The primary structure comprises 389 residues: Cytochrome b (389 aa).

4 consecutive transmembrane segments (helical) span residues 36–56, 80–102, 117–137, and 183–203; these read MGSL…FLAM, WLIR…THIA, VWTV…LGYC, and FFAF…MHMM. Heme b is bound by residues His86 and His100. Heme b-binding residues include His187 and His201. His206 provides a ligand contact to a ubiquinone. Transmembrane regions (helical) follow at residues 229-249, 293-313, 325-345, and 352-372; these read FVFK…LFVF, LLGV…PITD, LSKF…IIGM, and FVLI…IIVP.

It belongs to the cytochrome b family. As to quaternary structure, fungal cytochrome b-c1 complex contains 10 subunits; 3 respiratory subunits, 2 core proteins and 5 low-molecular weight proteins. Cytochrome b-c1 complex is a homodimer. The cofactor is heme b.

It is found in the mitochondrion inner membrane. In terms of biological role, component of the ubiquinol-cytochrome c reductase complex (complex III or cytochrome b-c1 complex) that is part of the mitochondrial respiratory chain. The b-c1 complex mediates electron transfer from ubiquinol to cytochrome c. Contributes to the generation of a proton gradient across the mitochondrial membrane that is then used for ATP synthesis. This Vanderwaltozyma polyspora (strain ATCC 22028 / DSM 70294 / BCRC 21397 / CBS 2163 / NBRC 10782 / NRRL Y-8283 / UCD 57-17) (Kluyveromyces polysporus) protein is Cytochrome b (COB).